Reading from the N-terminus, the 183-residue chain is Outer membrane protein H.8 (183 aa).

Positions 1–17 are cleaved as a signal peptide; it reads MKAYLALISAAVIGLAA. Cys18 carries N-palmitoyl cysteine lipidation. A lipid anchor (S-diacylglycerol cysteine) is attached at Cys18. The disordered stretch occupies residues 27–51; sequence AEATPAAEAPASEAPAAEAAPADAA. One can recognise a Plastocyanin-like domain in the interval 57–183; the sequence is GNCAATVESN…LMNGKVTLVD (127 aa). Residues His102, Cys166, His171, and Met175 each coordinate Cu cation.

It depends on Cu cation as a cofactor.

The protein resides in the cell outer membrane. In Neisseria meningitidis serogroup C / serotype 2a (strain ATCC 700532 / DSM 15464 / FAM18), this protein is Outer membrane protein H.8.